Consider the following 277-residue polypeptide: MKTIILFVTFLALSSSSLADETETEFHYKPGEIADPSKWSSIKAEWKICGTGKRQSPINLTPKIARIVHNSTEILQTYYKPVEAILKNRGFDMKVKWEDDAGKIVINDTDYKLVQSHWHAPSEHFLDGQRLAMELHMVHKSVEGHLAVIGVLFREGEPNAFISRIMDKIHKIADVQDGEVSIGKIDPREFGWDLTKFYEYRGSLTTPPCTEDVMWTIINKVGTVSREQIDVLTDARRGGYEKNARPAQPLNGRLVYLNEQSSPSPTPRLRIPRVGPV.

The signal sequence occupies residues 1–19 (MKTIILFVTFLALSSSSLA). The region spanning 24 to 259 (TEFHYKPGEI…LNGRLVYLNE (236 aa)) is the Alpha-carbonic anhydrase domain. C49 and C209 are joined by a disulfide. Residues N70 and N107 are each glycosylated (N-linked (GlcNAc...) asparagine). H117, H119, and H136 together coordinate Zn(2+). Substrate is bound at residue 205 to 206 (TT). The tract at residues 257–277 (LNEQSSPSPTPRLRIPRVGPV) is disordered.

Belongs to the alpha-class carbonic anhydrase family. It depends on Zn(2+) as a cofactor. Post-translationally, N-glycosylated. Expressed in flowers and siliques.

The protein resides in the plastid. It is found in the chloroplast stroma. It catalyses the reaction hydrogencarbonate + H(+) = CO2 + H2O. Functionally, reversible hydration of carbon dioxide. The protein is Alpha carbonic anhydrase 3 (ACA3) of Arabidopsis thaliana (Mouse-ear cress).